Consider the following 520-residue polypeptide: Protein nucleotidyltransferase YdiU (520 aa).

ATP-binding residues include Gly108, Gly110, Arg111, Lys130, Asp142, Gly143, Arg193, and Arg200. The active-site Proton acceptor is the Asp269. 2 residues coordinate Mg(2+): Asn270 and Asp279. Position 279 (Asp279) interacts with ATP.

Belongs to the SELO family. Mg(2+) is required as a cofactor. Requires Mn(2+) as cofactor.

The catalysed reaction is L-seryl-[protein] + ATP = 3-O-(5'-adenylyl)-L-seryl-[protein] + diphosphate. It carries out the reaction L-threonyl-[protein] + ATP = 3-O-(5'-adenylyl)-L-threonyl-[protein] + diphosphate. The enzyme catalyses L-tyrosyl-[protein] + ATP = O-(5'-adenylyl)-L-tyrosyl-[protein] + diphosphate. It catalyses the reaction L-histidyl-[protein] + UTP = N(tele)-(5'-uridylyl)-L-histidyl-[protein] + diphosphate. The catalysed reaction is L-seryl-[protein] + UTP = O-(5'-uridylyl)-L-seryl-[protein] + diphosphate. It carries out the reaction L-tyrosyl-[protein] + UTP = O-(5'-uridylyl)-L-tyrosyl-[protein] + diphosphate. In terms of biological role, nucleotidyltransferase involved in the post-translational modification of proteins. It can catalyze the addition of adenosine monophosphate (AMP) or uridine monophosphate (UMP) to a protein, resulting in modifications known as AMPylation and UMPylation. The polypeptide is Protein nucleotidyltransferase YdiU (Cupriavidus pinatubonensis (strain JMP 134 / LMG 1197) (Cupriavidus necator (strain JMP 134))).